We begin with the raw amino-acid sequence, 525 residues long: Ribonuclease III domain-containing protein RNC1, chloroplastic (525 aa).

Residues M1–R28 constitute a chloroplast transit peptide. RNase III domains lie at L125–G271 and E403–G503.

Interacts with RNA. Part of large ribonucleo-protein particles that contain CAF1 and/or CAF2.

It is found in the plastid. Its subcellular location is the chloroplast stroma. Its function is as follows. Binds specific group II introns in chloroplasts and facilitates their splicing. Acts on both subgroup IIA and subgroup IIB introns. The substrates of the subgroup II also require the CRM domain proteins CAF1 or CAF2. Binds both single-stranded and double-stranded RNA non-specifically, but lacks endonuclease activity. Required for plastid ribosome biogenesis. The polypeptide is Ribonuclease III domain-containing protein RNC1, chloroplastic (Zea mays (Maize)).